The chain runs to 164 residues: Phosphopantetheine adenylyltransferase (164 aa).

S10 is a substrate binding site. Residues 10-11 and H18 contribute to the ATP site; that span reads SF. Residues K42, L74, and R88 each contribute to the substrate site. ATP-binding positions include 89-91, E99, and 124-130; these read GLR and YSFLSSS.

It belongs to the bacterial CoaD family. As to quaternary structure, homohexamer. The cofactor is Mg(2+).

It localises to the cytoplasm. The enzyme catalyses (R)-4'-phosphopantetheine + ATP + H(+) = 3'-dephospho-CoA + diphosphate. Its pathway is cofactor biosynthesis; coenzyme A biosynthesis; CoA from (R)-pantothenate: step 4/5. Functionally, reversibly transfers an adenylyl group from ATP to 4'-phosphopantetheine, yielding dephospho-CoA (dPCoA) and pyrophosphate. This chain is Phosphopantetheine adenylyltransferase, found in Exiguobacterium sp. (strain ATCC BAA-1283 / AT1b).